The following is a 143-amino-acid chain: Transcriptional regulator MraZ (143 aa).

SpoVT-AbrB domains follow at residues 5-47 (TFTP…PKAE) and 76-119 (ADEQ…DAES).

Belongs to the MraZ family. As to quaternary structure, forms oligomers.

Its subcellular location is the cytoplasm. The protein localises to the nucleoid. The protein is Transcriptional regulator MraZ of Corynebacterium jeikeium (strain K411).